The sequence spans 49 residues: Putative metallothionein MT1DP (49 aa).

The interval Met-1 to Cys-29 is beta. A divalent metal cation contacts are provided by Cys-5, Cys-7, Cys-13, Cys-15, Cys-19, Cys-21, Cys-26, Cys-29, Cys-33, Cys-34, Cys-36, Cys-37, Cys-41, Cys-44, and Cys-48. An alpha region spans residues Lys-30–Thr-49.

Belongs to the metallothionein superfamily. Type 1 family.

Metallothioneins have a high content of cysteine residues that bind various heavy metals. The chain is Putative metallothionein MT1DP (MT1DP) from Homo sapiens (Human).